Here is a 147-residue protein sequence, read N- to C-terminus: Small ribosomal subunit protein bS18 (147 aa).

Belongs to the bacterial ribosomal protein bS18 family. In terms of assembly, part of the 30S ribosomal subunit. Forms a tight heterodimer with protein bS6.

Functionally, binds as a heterodimer with protein bS6 to the central domain of the 16S rRNA, where it helps stabilize the platform of the 30S subunit. The protein is Small ribosomal subunit protein bS18 of Dehalococcoides mccartyi (strain ATCC BAA-2100 / JCM 16839 / KCTC 5957 / BAV1).